A 1045-amino-acid chain; its full sequence is Unconventional myosin-Ia (1045 aa).

The Myosin motor domain maps to 11 to 697 (AAVGDLVMLD…TLFDLEKRRQ (687 aa)). 104–111 (GESGAGKT) contacts ATP. The segment at 574-596 (VATLMKNLYSKNPNYIRCIKPND) is actin-binding. 3 consecutive IQ domains span residues 701–727 (AELA…RKSQ), 723–750 (MRKS…KRSV), and 746–774 (MKRS…RSDA). The TH1 domain maps to 861–1044 (KALYAQSLQQ…RGSHKMEILV (184 aa)).

Belongs to the TRAFAC class myosin-kinesin ATPase superfamily. Myosin family. As to expression, intestine.

Functionally, could play an important role in morphogenesis and function of intestinal microvilli. This Gallus gallus (Chicken) protein is Unconventional myosin-Ia (MYO1A).